Here is a 574-residue protein sequence, read N- to C-terminus: Cyclomaltodextrinase (574 aa).

Residues Asn-144, Asp-146, Asn-149, Asp-150, Gly-168, and Asp-170 each contribute to the Ca(2+) site. Residues His-243 and Arg-323 each coordinate substrate. Residue Asp-325 is the Nucleophile of the active site. Glu-354 serves as the catalytic Proton donor. Substrate is bound by residues 420-421 (HD), Asp-465, and Arg-469.

Belongs to the glycosyl hydrolase 13 family. As to quaternary structure, monomer. The cofactor is Ca(2+).

It carries out the reaction cyclomaltodextrin + H2O = linear maltodextrin. In terms of biological role, hydrolyzes cyclodextrins. Can also act on linear maltodextrins, with the exception of maltose. The polypeptide is Cyclomaltodextrinase (Thermoanaerobacter pseudethanolicus (strain ATCC 33223 / 39E) (Clostridium thermohydrosulfuricum)).